The primary structure comprises 314 residues: MSFASEMKNELTRIDVDEMNAKAELSALIRMNGALSLSNQQFVINVQTENATTARRIYSLIKRVFNVEVEILVRKKMKLKKNNIYICRTKMKAKEILDELGILKDGIFTHEIDHSMIQDDEMRRSYLRGAFLAGGSVNNPETSSYHLEIFSQNESHAEGLTKLMNSYELNAKHLERKKGSITYLKEAEKISDFLSLIGGYQALLKFEDVRIVRDMRNSVNRLVNCETANLNKTVSAAMKQVESIKLIDKEIGIENLPDRLREIARIRVEHQEISLKELGEMVSTGPISKSGVNHRLRKLNDLADKIRNGEQIEL.

The segment at residues 274-308 is a DNA-binding region (H-T-H motif); that stretch reads SLKELGEMVSTGPISKSGVNHRLRKLNDLADKIRN.

The protein belongs to the WhiA family.

In terms of biological role, involved in cell division and chromosome segregation. The protein is Probable cell division protein WhiA of Staphylococcus aureus (strain Mu3 / ATCC 700698).